Consider the following 497-residue polypeptide: Trichoplein keratin filament-binding protein (497 aa).

Coiled-coil stretches lie at residues 67-140 (HCEK…LLYE), 166-271 (ATQK…ELGR), and 327-479 (MKQV…AKTM). Residues 72-457 (KEEKRKILEL…WEAARQEEEE (386 aa)) are interaction with keratin proteins. Residues 167–188 (TQKEEKKQQEATEKQENKRLEN) form a disordered region. Residues 168–188 (QKEEKKQQEATEKQENKRLEN) are compositionally biased toward basic and acidic residues. The tract at residues 258 to 424 (RQMAALRRKT…KQLAQRAKEE (167 aa)) is trichohyalin/plectin homology domain. Positions 441 to 497 (AERQGQEWEAARQEEEEEEEARQAEEHSNALLQQEAKTMAEKGYQPKLHGHLRIAWD) are disordered. Over residues 444-453 (QGQEWEAARQ) the composition is skewed to basic and acidic residues. Positions 488-497 (LHGHLRIAWD) are enriched in basic residues.

This sequence belongs to the TCHP family. Interacts specifically with keratin proteins including, KRT5, KRT6A, KRT8, KRT14, KRT16 and KRT18. Interacts with KCTD17. Ubiquitinated. Ubiquitination by the BCR(KCTD17) E3 ubiquitin ligase complex results in proteasomal degradation, and induces ciliogenesis. As to expression, expressed in all tissues examined, including brain, liver, small intestine, large intestine, lung and heart. Found concentrated in tubular structures within hepatocytes, and in the apical cortical region and desmosomes of the apical junctional domain in enterocytes of the small intestine. In the hair follicle, localized at the outer root sheath. Also expressed in blood vessels (at protein level).

The protein localises to the cytoplasm. The protein resides in the cytoskeleton. It localises to the cell membrane. It is found in the mitochondrion. Its subcellular location is the microtubule organizing center. The protein localises to the centrosome. In terms of biological role, tumor suppressor which has the ability to inhibit cell growth and be pro-apoptotic during cell stress. May act as a 'capping' or 'branching' protein for keratin filaments in the cell periphery. May regulate K8/K18 filament and desmosome organization mainly at the apical or peripheral regions of simple epithelial cells. Is a negative regulator of ciliogenesis. The sequence is that of Trichoplein keratin filament-binding protein from Mus musculus (Mouse).